The sequence spans 305 residues: Mitochondrial thiamine pyrophosphate carrier 1 (305 aa).

A run of 6 helical transmembrane segments spans residues 16 to 32 (VSPY…GAVA), 84 to 100 (ILYV…YSSI), 122 to 142 (LVSG…FDLL), 169 to 193 (GFTG…LMFW), 213 to 229 (ICGF…TFPL), and 270 to 287 (GFGI…VSLF). Solcar repeat units follow at residues 16–103 (VSPY…ISRW), 116–201 (PSSA…VRET), and 206–295 (DIPF…SLAA).

Belongs to the mitochondrial carrier (TC 2.A.29) family.

It is found in the mitochondrion inner membrane. In terms of biological role, mitochondrial transporter that mediates uptake of thiamine pyrophosphate (ThPP) into mitochondria. This is Mitochondrial thiamine pyrophosphate carrier 1 (TPC1) from Scheffersomyces stipitis (strain ATCC 58785 / CBS 6054 / NBRC 10063 / NRRL Y-11545) (Yeast).